Reading from the N-terminus, the 200-residue chain is ATP synthase subunit b (200 aa).

Residues 12 to 32 traverse the membrane as a helical segment; the sequence is ILSGLAVAVAILVPVLALASG.

It belongs to the ATPase B chain family. In terms of assembly, F-type ATPases have 2 components, F(1) - the catalytic core - and F(0) - the membrane proton channel. F(1) has five subunits: alpha(3), beta(3), gamma(1), delta(1), epsilon(1). F(0) has three main subunits: a(1), b(2) and c(10-14). The alpha and beta chains form an alternating ring which encloses part of the gamma chain. F(1) is attached to F(0) by a central stalk formed by the gamma and epsilon chains, while a peripheral stalk is formed by the delta and b chains.

It is found in the cell inner membrane. F(1)F(0) ATP synthase produces ATP from ADP in the presence of a proton or sodium gradient. F-type ATPases consist of two structural domains, F(1) containing the extramembraneous catalytic core and F(0) containing the membrane proton channel, linked together by a central stalk and a peripheral stalk. During catalysis, ATP synthesis in the catalytic domain of F(1) is coupled via a rotary mechanism of the central stalk subunits to proton translocation. Its function is as follows. Component of the F(0) channel, it forms part of the peripheral stalk, linking F(1) to F(0). In Trichlorobacter lovleyi (strain ATCC BAA-1151 / DSM 17278 / SZ) (Geobacter lovleyi), this protein is ATP synthase subunit b.